The primary structure comprises 500 residues: L-arabinose isomerase (500 aa).

Residues E306, E333, H350, and H450 each coordinate Mn(2+).

This sequence belongs to the arabinose isomerase family. In terms of assembly, homohexamer. It depends on Mn(2+) as a cofactor.

The enzyme catalyses beta-L-arabinopyranose = L-ribulose. The protein operates within carbohydrate degradation; L-arabinose degradation via L-ribulose; D-xylulose 5-phosphate from L-arabinose (bacterial route): step 1/3. Catalyzes the conversion of L-arabinose to L-ribulose. The chain is L-arabinose isomerase (araA) from Escherichia coli (strain K12).